A 471-amino-acid polypeptide reads, in one-letter code: Glutamate--tRNA ligase (471 aa).

Positions 9 to 19 (PSPTGYLHVGG) match the 'HIGH' region motif. Cysteine 98, cysteine 100, cysteine 125, and histidine 127 together coordinate Zn(2+). Positions 237-241 (KLSKR) match the 'KMSKS' region motif. Lysine 240 provides a ligand contact to ATP.

It belongs to the class-I aminoacyl-tRNA synthetase family. Glutamate--tRNA ligase type 1 subfamily. As to quaternary structure, monomer. It depends on Zn(2+) as a cofactor.

It localises to the cytoplasm. It carries out the reaction tRNA(Glu) + L-glutamate + ATP = L-glutamyl-tRNA(Glu) + AMP + diphosphate. In terms of biological role, catalyzes the attachment of glutamate to tRNA(Glu) in a two-step reaction: glutamate is first activated by ATP to form Glu-AMP and then transferred to the acceptor end of tRNA(Glu). This Shigella boydii serotype 4 (strain Sb227) protein is Glutamate--tRNA ligase.